The chain runs to 118 residues: NADH-quinone oxidoreductase subunit A (118 aa).

Helical transmembrane passes span 5–25, 61–81, and 90–110; these read FAAV…MMLM, FLYA…FPWA, and FAFI…WYAW.

This sequence belongs to the complex I subunit 3 family. NDH-1 is composed of 14 different subunits. Subunits NuoA, H, J, K, L, M, N constitute the membrane sector of the complex.

The protein resides in the cell membrane. The enzyme catalyses a quinone + NADH + 5 H(+)(in) = a quinol + NAD(+) + 4 H(+)(out). In terms of biological role, NDH-1 shuttles electrons from NADH, via FMN and iron-sulfur (Fe-S) centers, to quinones in the respiratory chain. The immediate electron acceptor for the enzyme in this species is believed to be a menaquinone. Couples the redox reaction to proton translocation (for every two electrons transferred, four hydrogen ions are translocated across the cytoplasmic membrane), and thus conserves the redox energy in a proton gradient. The chain is NADH-quinone oxidoreductase subunit A from Desulfitobacterium hafniense (strain Y51).